Here is a 315-residue protein sequence, read N- to C-terminus: MDHSEIDVETSPLTAADAQAVHRLARAAEHVDQVAPLSEQPLLRLLDAEAPTTHLMVRAADDLAGYAQVDRGAPGTASAELVVHPFARHHGVGTALLEHALELMDAEGRVLSVWAHGDLPAARSLAARTGLVVVRELWKMHLPLDGSTSTPESAPAAPLAPGVSLRAFRPGEDDAAWLAVNARAFASHPEQGRLTQTDLAARVAEPWFDAGSFLLAERDGDLVGFCWLKVPADQPQDAPRVGEIYALGVDPSAQGLRLGTALTAAGLDRLREVGVEVVELYTEGDNTVAIRTYTAAGFTRATVDVQMARPSDATA.

N-acetyltransferase domains follow at residues 8-145 (VETS…LPLD) and 163-315 (VSLR…DATA). Glutamate 39 is a 1D-myo-inositol 2-(L-cysteinylamino)-2-deoxy-alpha-D-glucopyranoside binding site. Acetyl-CoA is bound by residues 81–83 (LVV) and 89–94 (HHGVGT). The 1D-myo-inositol 2-(L-cysteinylamino)-2-deoxy-alpha-D-glucopyranoside site is built by glutamate 190, lysine 229, and glutamate 243. 247–249 (LGV) contacts acetyl-CoA. Tyrosine 281 serves as a coordination point for 1D-myo-inositol 2-(L-cysteinylamino)-2-deoxy-alpha-D-glucopyranoside. Position 286-291 (286-291 (NTVAIR)) interacts with acetyl-CoA.

The protein belongs to the acetyltransferase family. MshD subfamily. In terms of assembly, monomer.

The catalysed reaction is 1D-myo-inositol 2-(L-cysteinylamino)-2-deoxy-alpha-D-glucopyranoside + acetyl-CoA = mycothiol + CoA + H(+). Functionally, catalyzes the transfer of acetyl from acetyl-CoA to desacetylmycothiol (Cys-GlcN-Ins) to form mycothiol. This is Mycothiol acetyltransferase from Sanguibacter keddieii (strain ATCC 51767 / DSM 10542 / NCFB 3025 / ST-74).